The following is a 462-amino-acid chain: Neuronal acetylcholine receptor subunit non-alpha-2 (462 aa).

The first 30 residues, 1 to 30, serve as a signal peptide directing secretion; sequence MTLAVIGLFTLFTSIIAITPAREFVSLAER. Residues 31–234 are Extracellular-facing; it reads EDALLRELFQ…ITYSFILKRL (204 aa). N53 and N168 each carry an N-linked (GlcNAc...) asparagine glycan. C155 and C169 are joined by a disulfide. 3 consecutive transmembrane segments (helical) span residues 235–259, 267–284, and 301–322; these read PLFY…VFYL, VSLS…LLVI, and YLLF…VINV. At 323–428 the chain is on the cytoplasmic side; sequence HHRSSATYHP…WKFVAQVLDR (106 aa). The span at 362 to 372 shows a compositional bias: basic and acidic residues; that stretch reads ELEPHSPDLKP. The tract at residues 362-384 is disordered; it reads ELEPHSPDLKPRNKKGPPGPEGE. Residues 429–446 form a helical membrane-spanning segment; it reads IFLWTFLTVSVLGTILIF.

This sequence belongs to the ligand-gated ion channel (TC 1.A.9) family. Acetylcholine receptor (TC 1.A.9.1) subfamily. As to quaternary structure, neuronal AChR seems to be composed of two different type of subunits: alpha and beta.

The protein localises to the postsynaptic cell membrane. It localises to the cell membrane. Its function is as follows. After binding acetylcholine, the AChR responds by an extensive change in conformation that affects all subunits and leads to opening of an ion-conducting channel across the plasma membrane. The protein is Neuronal acetylcholine receptor subunit non-alpha-2 of Carassius auratus (Goldfish).